The following is a 449-amino-acid chain: BPI fold-containing family B member 6 (449 aa).

The N-terminal stretch at 1–18 (MLCSLSLVLCGLLAGTRA) is a signal peptide. Asn115 carries N-linked (GlcNAc...) asparagine glycosylation. A disulfide bridge links Cys138 with Cys172.

It belongs to the BPI/LBP/Plunc superfamily. BPI/LBP family.

It is found in the secreted. The polypeptide is BPI fold-containing family B member 6 (Bpifb6) (Mus musculus (Mouse)).